A 162-amino-acid polypeptide reads, in one-letter code: Beta-carotene hydroxylase (162 aa).

The 128-residue stretch at 8–135 folds into the Fatty acid hydroxylase domain; it reads VATVLVMELT…GRDHCVSFGF (128 aa).

Belongs to the sterol desaturase family.

The catalysed reaction is all-trans-beta-carotene + 4 reduced [2Fe-2S]-[ferredoxin] + 2 O2 + 4 H(+) = all-trans-zeaxanthin + 4 oxidized [2Fe-2S]-[ferredoxin] + 2 H2O. It functions in the pathway carotenoid biosynthesis; astaxanthin biosynthesis. Catalyzes the hydroxylation reaction from beta-carotene to zeaxanthin via beta-cryptoxanthin. The polypeptide is Beta-carotene hydroxylase (crtZ) (Paracoccus sp. (strain N81106 / MBIC 01143) (Agrobacterium aurantiacum)).